We begin with the raw amino-acid sequence, 83 residues long: Large ribosomal subunit protein bL31B (83 aa).

This sequence belongs to the bacterial ribosomal protein bL31 family. Type B subfamily. In terms of assembly, part of the 50S ribosomal subunit.

The polypeptide is Large ribosomal subunit protein bL31B (Lacticaseibacillus casei (strain BL23) (Lactobacillus casei)).